A 450-amino-acid polypeptide reads, in one-letter code: tRNA modification GTPase MnmE (450 aa).

(6S)-5-formyl-5,6,7,8-tetrahydrofolate contacts are provided by Arg-23, Glu-80, and Arg-123. The TrmE-type G domain occupies 219–372; the sequence is GLHVVLAGQP…LRARLLQMAG (154 aa). Asn-229 serves as a coordination point for K(+). GTP contacts are provided by residues 229-234, 248-254, and 273-276; these read NVGKSS, TPIAGTT, and DTAG. A Mg(2+)-binding site is contributed by Ser-233. K(+)-binding residues include Thr-248, Ile-250, and Thr-253. Thr-254 serves as a coordination point for Mg(2+). A (6S)-5-formyl-5,6,7,8-tetrahydrofolate-binding site is contributed by Lys-450.

The protein belongs to the TRAFAC class TrmE-Era-EngA-EngB-Septin-like GTPase superfamily. TrmE GTPase family. In terms of assembly, homodimer. Heterotetramer of two MnmE and two MnmG subunits. Requires K(+) as cofactor.

It localises to the cytoplasm. In terms of biological role, exhibits a very high intrinsic GTPase hydrolysis rate. Involved in the addition of a carboxymethylaminomethyl (cmnm) group at the wobble position (U34) of certain tRNAs, forming tRNA-cmnm(5)s(2)U34. The chain is tRNA modification GTPase MnmE from Bordetella avium (strain 197N).